The chain runs to 1237 residues: GTPase activating protein BUD2 (1237 aa).

Residues 79-110 are compositionally biased toward low complexity; sequence GSGKSSISQPPPTTSTRRNLLRKSSNLNSSDQ. Positions 79 to 124 are disordered; it reads GSGKSSISQPPPTTSTRRNLLRKSSNLNSSDQSHSKSSEDNEHQPP. Residues 111–121 are compositionally biased toward basic and acidic residues; the sequence is SHSKSSEDNEH. The C2 domain maps to 381-503; sequence NVEHPQLYDF…KQIKTTSTIM (123 aa). Residues 637 to 905 form the Ras-GAP domain; that stretch reads NSQDQAVSNS…PEIYDYFDKL (269 aa). Disordered regions lie at residues 721 to 762 and 969 to 1007; these read SIHE…ERER and NNNG…PDLD. The segment covering 735 to 754 has biased composition (acidic residues); that stretch reads DVSDDDDDDDDNSSDDDADY. Basic and acidic residues predominate over residues 986 to 996; the sequence is RDMEREQDRSR. A coiled-coil region spans residues 1065–1093; that stretch reads NITLKDIQKQSTKIMNKIQELEIYLENYE. Positions 1170–1204 are disordered; the sequence is NGGMGNRNGHDVNGHNNNNNNNNNNTGDGYNETDR. Residues 1183-1199 are compositionally biased toward low complexity; that stretch reads GHNNNNNNNNNNTGDGY.

It is found in the cytoplasm. The protein localises to the cell cortex. It localises to the cell tip. Its subcellular location is the cell septum. Its function is as follows. GTPase activating protein (GAP) for RSR1 which is involved in the polarization of yeast and hyphal cells. Directs the site of new daughter cell growth in yeast and hyphal cells. Important for hyphae to maintain linear growth and necessary for hyphal responses to directional cues in the environment (tropisms). Required for correct localization of the septin rings and stabilization of the polarisome at hyphal tips. Involved in cell adhesion. This is GTPase activating protein BUD2 (BUD2) from Candida albicans (strain SC5314 / ATCC MYA-2876) (Yeast).